We begin with the raw amino-acid sequence, 199 residues long: Replication protein (199 aa).

This sequence belongs to the Gram-positive plasmids replication protein type 2 family.

Its function is as follows. Is essential for plasmid replication. Nicks the positive strand at the plus origin of replication. The sequence is that of Replication protein (repF) from Staphylococcus aureus.